Consider the following 867-residue polypeptide: MAKLTPMMEQYIQIKNEYKDAFLFYRLGDFYELFYEDATRAAQELEITLTKRAGGKGDPIPMCGVPYHSAENYIKTLIDRGYKVAICEQVEDPKTAKGVVKREVVQMITPGTVMESTMLTDGENNYIGSLSHFQDGSYVIVYNDLSTGENRLAFINDGWDAVIHEFYNQPIKEIVISSNLPEELQIQLKERLNVTLSYQDEVTFNAEFRELSENLNDERLMKAFSRLLNYIQTTQKRSLHHLQKAEVIELKKYMSLDMYSKRNLELTETIMKKSKHGSLLWVLDKTVTAMGARTLKKWLERPLLSKQKINERLEVVQGFYDGFMERESLRDLLKSVYDLERLSGRIAFGNVNARDLIQLKQSLSRIPAIQETLRQFDQPEITRLAEMLIYPEQMVESLEKSIVDEPPISIKEGSLIKEGYHDQLDTYRDASRNGKKWIAQLEHQEREETGIRSLKVGYNRVFGYYIEITKPNLHLLPEGRYERRQTLTNAERFVNEELKEKEKLILEAEEKSVELEYDLFIQIRDQIKEEIPLIQQLAHIISQMDVLQSFATVSESNNYVRPDFNDEQLQVTKGRHPVVEQVMKDGTFVPNDVVFDKSQNMLLITGPNMSGKSTYMRQVALTSIMGQIGCFIPAEQATLCVFDQIFTRIGAADDLVSGQSTFMVEMLEARHAISNATDRSLILLDEIGRGTSTYDGMALAQAIVEYIHHNIAAKTLFSTHYHELTALEDSLHHLKNIHVRAEEHEGNVVFLHQIKEGAADQSYGIHVAKLADLPNELIERASVILEELEDDSNKKPTPTKDKLESGQLSFFIEESNKKKAEMPKQEKTHNNQEQSVIEDLKNVNVLDLTPLEAMNELYRLQKGLKQY.

Residue 606–613 (GPNMSGKS) participates in ATP binding.

The protein belongs to the DNA mismatch repair MutS family.

Functionally, this protein is involved in the repair of mismatches in DNA. It is possible that it carries out the mismatch recognition step. This protein has a weak ATPase activity. In Oceanobacillus iheyensis (strain DSM 14371 / CIP 107618 / JCM 11309 / KCTC 3954 / HTE831), this protein is DNA mismatch repair protein MutS.